A 340-amino-acid polypeptide reads, in one-letter code: MTNKNAYAQSGVDVEAGYEVVERIKKHVARTERAGVMGALGGFGGMFDLSQTGVKEPVLISGTDGVGTKLMLAIQYDKHDTIGQDCVAMCVNDIVAAGAEPLYFLDYIATGKNEPAKLEQVVAGVAEGCVQSGAALIGGETAEMPGMYGEDDYDLAGFAVGVAEKSEIIDGSKVAEGDVLLGLTSSGIHSNGYSLVRRVFADYTGEEVLPELEGKKLKEVLLEPTRIYVKALLPLIKEKLVHGIAHITGGGFIENVPRMFADDLAAEIEEDKIPVLPIFKALEKYGHIKHQEMFEIFNMGLGMILAVAPENVDRVKELLDEPVYEVGRIVKKENESVLIK.

It belongs to the AIR synthase family.

The protein resides in the cytoplasm. It carries out the reaction 2-formamido-N(1)-(5-O-phospho-beta-D-ribosyl)acetamidine + ATP = 5-amino-1-(5-phospho-beta-D-ribosyl)imidazole + ADP + phosphate + H(+). It participates in purine metabolism; IMP biosynthesis via de novo pathway; 5-amino-1-(5-phospho-D-ribosyl)imidazole from N(2)-formyl-N(1)-(5-phospho-D-ribosyl)glycinamide: step 2/2. The protein is Phosphoribosylformylglycinamidine cyclo-ligase of Streptococcus sanguinis (strain SK36).